The chain runs to 301 residues: uncharacterized protein (301 aa).

Over residues 16-28 (EITEESEKTKTDL) the composition is skewed to basic and acidic residues. The segment at 16–38 (EITEESEKTKTDLQKANTPNKTE) is disordered. Residues 29–38 (QKANTPNKTE) are compositionally biased toward polar residues. Residues 252–301 (KENVALKMLQRCGWKEGQGLGQHNQGIINPLHVEISGFVTETKHSKINDK) enclose the G-patch domain.

This is an uncharacterized protein from Schizosaccharomyces pombe (strain 972 / ATCC 24843) (Fission yeast).